The sequence spans 389 residues: viridiflorene synthase Agr2 (389 aa).

An N-terminal signal peptide occupies residues 1 to 15; sequence MVWDFVLSLFHSLLA. Mg(2+) contacts are provided by Asp-128, Asn-263, Ser-267, and Glu-271. The DDXXD motif signature appears at 128-132; it reads DEVTD. Residues Arg-360 and Tyr-361 each coordinate (2E,6E)-farnesyl diphosphate.

The protein belongs to the terpene synthase family. Requires Mg(2+) as cofactor.

It carries out the reaction (2E,6E)-farnesyl diphosphate = viridiflorene + diphosphate. Terpene cyclase that catalyzes the cyclization of farnesyl diphosphate (FPP) to viridiflorene. The chain is viridiflorene synthase Agr2 from Cyclocybe aegerita (Black poplar mushroom).